We begin with the raw amino-acid sequence, 271 residues long: NADPH-dependent 7-cyano-7-deazaguanine reductase (271 aa).

79-81 (IES) contacts substrate. NADPH is bound at residue 81–82 (SK). Cys178 functions as the Thioimide intermediate in the catalytic mechanism. Asp185 (proton donor) is an active-site residue. A substrate-binding site is contributed by 217-218 (HE). 246 to 247 (RG) lines the NADPH pocket.

It belongs to the GTP cyclohydrolase I family. QueF type 2 subfamily. As to quaternary structure, homodimer.

The protein resides in the cytoplasm. It catalyses the reaction 7-aminomethyl-7-carbaguanine + 2 NADP(+) = 7-cyano-7-deazaguanine + 2 NADPH + 3 H(+). It functions in the pathway tRNA modification; tRNA-queuosine biosynthesis. Its function is as follows. Catalyzes the NADPH-dependent reduction of 7-cyano-7-deazaguanine (preQ0) to 7-aminomethyl-7-deazaguanine (preQ1). The chain is NADPH-dependent 7-cyano-7-deazaguanine reductase from Acinetobacter baylyi (strain ATCC 33305 / BD413 / ADP1).